Reading from the N-terminus, the 143-residue chain is Large ribosomal subunit protein uL13 (143 aa).

This sequence belongs to the universal ribosomal protein uL13 family. In terms of assembly, part of the 50S ribosomal subunit.

In terms of biological role, this protein is one of the early assembly proteins of the 50S ribosomal subunit, although it is not seen to bind rRNA by itself. It is important during the early stages of 50S assembly. This chain is Large ribosomal subunit protein uL13, found in Methanosarcina acetivorans (strain ATCC 35395 / DSM 2834 / JCM 12185 / C2A).